The following is a 207-amino-acid chain: Abscisic acid receptor PYL4 (207 aa).

The interval 45 to 195 is START-like; sequence HEVGPNQCCS…NLQSLAKIAE (151 aa). Cysteine 52 and cysteine 176 are oxidised to a cystine. Residues lysine 81, 111 to 116, 138 to 144, and glutamate 160 each bind abscisate; these read AASSTE and RLSNYRS. The Gate loop signature appears at 107–111; the sequence is SGLPA. Residues 137-139 carry the Latch loop motif; the sequence is HRL.

It belongs to the PYR/PYL/RCAR abscisic acid intracellular receptor family. As to quaternary structure, monomer. Homodimer. Binds ABA on one subunit only. Interacts with HAB1, ABI1 and ABI2, and possibly with other PP2Cs. Binds to CARs protein in an ABA-independent manner, both at the plasma membrane and in the nucleus. Interacts directly with CAR1 and CAR4. Interacts with TOPP1. Interacts with DDA1. Interacts with FREE1 (via N-terminus). Interacts with the E3 ubiquitin-protein ligase RSL1 at the plasma membrane. In terms of processing, ubiquitynated and degraded by the proteasome upon binding to the E3 ubiquitin-protein ligase RSL1 at the plasma membrane.

It is found in the cytoplasm. The protein localises to the nucleus. Its subcellular location is the cell membrane. The protein resides in the vacuole. In terms of biological role, receptor for abscisic acid (ABA) required for ABA-mediated responses such as stomatal closure and germination inhibition. Inhibits the activity of group-A protein phosphatases type 2C (PP2Cs) when activated by ABA. Can be activated by both (-)-ABA and (+)-ABA. The chain is Abscisic acid receptor PYL4 from Arabidopsis thaliana (Mouse-ear cress).